Here is a 645-residue protein sequence, read N- to C-terminus: Rab11 family-interacting protein 5 (645 aa).

One can recognise a C2 domain in the interval 1-146; sequence MALVRDPEPA…AGRAQHTQWY (146 aa). Phosphoserine is present on residues Ser176, Ser283, Ser286, Ser307, Ser357, and Ser367. The segment at 271–299 is disordered; sequence GAELLTRSPSHSSWLSTEGGRDSIQSPKL. The segment covering 277-286 has biased composition (polar residues); that stretch reads RSPSHSSWLS. The tract at residues 341 to 550 is disordered; the sequence is SHVYNEEPQP…STALSSGLER (210 aa). Positions 357-374 are enriched in low complexity; the sequence is SISGPFPPSSSLHSVPPR. Basic and acidic residues predominate over residues 375–387; that stretch reads SSEEGSRSSDDSW. Phosphoserine occurs at positions 391 and 395. Over residues 452 to 463 the composition is skewed to basic residues; sequence RMGLFHHHHHQG. 5 positions are modified to phosphoserine: Ser486, Ser530, Ser539, Ser545, and Ser640. Residues 578–640 enclose the FIP-RBD domain; it reads KDSAVLDQSA…ETSPTLLQIS (63 aa).

In terms of assembly, interacts with RAB11FIP4. Interacts with NAPG. Interacts with RO60. Interacts with RAB11A that has been activated by GTP binding. Phosphorylated on serine and threonine residues. Phosphorylation at Ser-357 is PKA-dependent.

Its subcellular location is the cytoplasm. It is found in the recycling endosome membrane. The protein resides in the early endosome membrane. It localises to the golgi apparatus membrane. The protein localises to the cytoplasmic vesicle. Its subcellular location is the secretory vesicle membrane. It is found in the mitochondrion membrane. Rab effector involved in protein trafficking from apical recycling endosomes to the apical plasma membrane. Involved in insulin granule exocytosis. May regulate V-ATPase intracellular transport in response to extracellular acidosis. In Mus musculus (Mouse), this protein is Rab11 family-interacting protein 5.